The following is a 206-amino-acid chain: Ribosomal RNA small subunit methyltransferase G (206 aa).

S-adenosyl-L-methionine-binding positions include Gly-74, Leu-79, 125 to 126 (VE), and Arg-140.

The protein belongs to the methyltransferase superfamily. RNA methyltransferase RsmG family.

It is found in the cytoplasm. The catalysed reaction is guanosine(527) in 16S rRNA + S-adenosyl-L-methionine = N(7)-methylguanosine(527) in 16S rRNA + S-adenosyl-L-homocysteine. Specifically methylates the N7 position of guanine in position 527 of 16S rRNA. The chain is Ribosomal RNA small subunit methyltransferase G from Shewanella sp. (strain MR-4).